The chain runs to 269 residues: C-type lectin domain family 2 member G (269 aa).

The Cytoplasmic segment spans residues M1–C107. Residues C108 to A128 traverse the membrane as a helical; Signal-anchor for type II membrane protein segment. Topologically, residues T129–V269 are extracellular. The C-type lectin domain maps to V150–S254. N163 is a glycosylation site (N-linked (GlcNAc...) asparagine). C171 and C253 are oxidised to a cystine.

As to expression, detected in vagina, eye, tongue, stomach and spleen.

It localises to the cell membrane. Inhibits osteoclast formation. This Mus musculus (Mouse) protein is C-type lectin domain family 2 member G (Clec2g).